The sequence spans 460 residues: MATMIRGHRLRIAEGDIPIAGVKSSRIYSDISPFKKASDLMIHWNEFVFKVMPEDIAGDGFRLASIPVIPSSEVQAVLRKRESTNYVHWGALSISIDALFRKNAGVSGWCYVYDNRWETFEQAMLQKFHFNLDSGSATLVTSPNFPVSLDDPGLSNSISVAVMFENLNFKFESYPISVRVGNMCRFFDSFLSSVKNKVDSNFLLEASNADPLGVGAFGFEQDDQVSELFNYIQTVPTQAIKFREHEIPKGFLGMMGKKKIKSFEFASGSKGMERRKPNRGKQIDRSFSQRAVPGFRSQNEKVEHQGLSTDSDFENFLRNKRGNKAGVKSTASEGSSVDNISSREFQFARQNQAKEDGSSSEFAAQGGRKSKGISGRRKQTSSWKDRGNPGTDTGVHLREHSDPGNVRADGVSGPSGGSEINGGSISPRVLQPEGSGQLDQSFQDYLFGPEHQQNDIPSGL.

Disordered regions lie at residues 267–314 (SGSK…SDFE) and 349–460 (RQNQ…PSGL). Residues 368-379 (RKSKGISGRRKQ) are compositionally biased toward basic residues.

The protein belongs to the tobamoviruses movement protein family.

In terms of biological role, suppressor of viral-induced RNA silencing. This chain is Putative movement protein, found in Crataegus (hawthorn).